Reading from the N-terminus, the 126-residue chain is Methylglyoxal synthase (126 aa).

Residues 1 to 126 (MAERQKIALI…ADRLLPVITE (126 aa)) form the MGS-like domain. Substrate is bound by residues H12, K16, 38–41 (TGTT), and 59–60 (SG). Catalysis depends on D65, which acts as the Proton donor/acceptor. H92 contacts substrate.

It belongs to the methylglyoxal synthase family.

It catalyses the reaction dihydroxyacetone phosphate = methylglyoxal + phosphate. Its function is as follows. Catalyzes the formation of methylglyoxal from dihydroxyacetone phosphate. This is Methylglyoxal synthase from Allorhizobium ampelinum (strain ATCC BAA-846 / DSM 112012 / S4) (Agrobacterium vitis (strain S4)).